A 46-amino-acid polypeptide reads, in one-letter code: Short transmembrane mitochondrial protein 1 (46 aa).

Residues 7–23 (GFTLGNVVGMYLAQNYE) traverse the membrane as a helical segment.

This sequence belongs to the STMP1 family. As to expression, widely expressed. Expressed more abundantly in brain compared with other tissues such as heart, muscle and liver.

Its subcellular location is the mitochondrion inner membrane. The protein localises to the mitochondrion outer membrane. It is found in the mitochondrion intermembrane space. Microprotein involved in mitochondrial respiratory chain complex III (ubiquinol-cytochrome c oxidoreductase) and complex IV (mitochondrial cytochrome c oxidase complex) assembly. Required for the formation of mitochondrial supercomplexes (SCs). Also required for the activation of the NLRP3 inflammasome. The chain is Short transmembrane mitochondrial protein 1 from Danio rerio (Zebrafish).